The chain runs to 179 residues: Small ribosomal subunit protein uS5c (179 aa).

The S5 DRBM domain maps to 26-89 (FVERLIKISR…TDGRKNLIDV (64 aa)).

The protein belongs to the universal ribosomal protein uS5 family. As to quaternary structure, part of the 30S ribosomal subunit. Contacts protein S4.

The protein resides in the plastid. The protein localises to the chloroplast. With S4 and S12 plays an important role in translational accuracy. This Thalassiosira pseudonana (Marine diatom) protein is Small ribosomal subunit protein uS5c (rps5).